Reading from the N-terminus, the 241-residue chain is Agamous-like MADS-box protein AP1 (241 aa).

The MADS-box domain occupies 1–61 (MGRGRVQLKR…GKLFEYSTDS (61 aa)). Positions 88-178 (QGNWSLEYSK…AKEIKEKEKT (91 aa)) constitute a K-box domain.

In terms of tissue distribution, expressed in tendrils and flowers.

It is found in the nucleus. Its function is as follows. Probable transcription factor involved in flower development. The polypeptide is Agamous-like MADS-box protein AP1 (Vitis vinifera (Grape)).